We begin with the raw amino-acid sequence, 30 residues long: Trypsin inhibitor 1 (30 aa).

3 disulfide bridges follow: C4/C21, C11/C23, and C17/C29.

The protein belongs to the protease inhibitor I7 (squash-type serine protease inhibitor) family.

It localises to the secreted. Functionally, inhibits trypsin. The protein is Trypsin inhibitor 1 of Momordica charantia (Bitter gourd).